Consider the following 218-residue polypeptide: Protein-lysine N-methyltransferase M142.8 (218 aa).

The protein belongs to the class I-like SAM-binding methyltransferase superfamily. EFM5 family.

The protein localises to the cytoplasm. Its function is as follows. S-adenosyl-L-methionine-dependent protein-lysine N-methyltransferase that methylates elongation factor 1-alpha. This Caenorhabditis elegans protein is Protein-lysine N-methyltransferase M142.8.